Reading from the N-terminus, the 471-residue chain is Arginine biosynthesis bifunctional protein ArgJ, mitochondrial (471 aa).

Residues 1–33 (MAMAGCNGFFLHQLRQPRLQLARQLGRTPSRAY) constitute a mitochondrion transit peptide. 6 residues coordinate substrate: T201, K230, T241, E327, N466, and T471. T241 (nucleophile) is an active-site residue.

This sequence belongs to the ArgJ family. In terms of assembly, heterodimer of an alpha and a beta chain. Post-translationally, the alpha and beta chains are autoproteolytically processed from a single precursor protein within the mitochondrion.

It localises to the mitochondrion matrix. It carries out the reaction N(2)-acetyl-L-ornithine + L-glutamate = N-acetyl-L-glutamate + L-ornithine. It catalyses the reaction L-glutamate + acetyl-CoA = N-acetyl-L-glutamate + CoA + H(+). Its pathway is amino-acid biosynthesis; L-arginine biosynthesis; L-ornithine and N-acetyl-L-glutamate from L-glutamate and N(2)-acetyl-L-ornithine (cyclic): step 1/1. It functions in the pathway amino-acid biosynthesis; L-arginine biosynthesis; N(2)-acetyl-L-ornithine from L-glutamate: step 1/4. Functionally, catalyzes two activities which are involved in the cyclic version of arginine biosynthesis: the synthesis of acetylglutamate from glutamate and acetyl-CoA, and of ornithine by transacetylation between acetylornithine and glutamate. In Chaetomium globosum (strain ATCC 6205 / CBS 148.51 / DSM 1962 / NBRC 6347 / NRRL 1970) (Soil fungus), this protein is Arginine biosynthesis bifunctional protein ArgJ, mitochondrial.